Reading from the N-terminus, the 279-residue chain is Putative pyruvate, phosphate dikinase regulatory protein (279 aa).

157-164 provides a ligand contact to ADP; the sequence is GVSRTSKT.

The protein belongs to the pyruvate, phosphate/water dikinase regulatory protein family. PDRP subfamily.

It carries out the reaction N(tele)-phospho-L-histidyl/L-threonyl-[pyruvate, phosphate dikinase] + ADP = N(tele)-phospho-L-histidyl/O-phospho-L-threonyl-[pyruvate, phosphate dikinase] + AMP + H(+). It catalyses the reaction N(tele)-phospho-L-histidyl/O-phospho-L-threonyl-[pyruvate, phosphate dikinase] + phosphate + H(+) = N(tele)-phospho-L-histidyl/L-threonyl-[pyruvate, phosphate dikinase] + diphosphate. Functionally, bifunctional serine/threonine kinase and phosphorylase involved in the regulation of the pyruvate, phosphate dikinase (PPDK) by catalyzing its phosphorylation/dephosphorylation. This Lactobacillus helveticus (strain DPC 4571) protein is Putative pyruvate, phosphate dikinase regulatory protein.